The chain runs to 169 residues: Peptide deformylase 1 (169 aa).

Fe cation is bound by residues C91 and H133. E134 is a catalytic residue. H137 serves as a coordination point for Fe cation.

It belongs to the polypeptide deformylase family. Fe(2+) serves as cofactor.

The enzyme catalyses N-terminal N-formyl-L-methionyl-[peptide] + H2O = N-terminal L-methionyl-[peptide] + formate. Removes the formyl group from the N-terminal Met of newly synthesized proteins. Requires at least a dipeptide for an efficient rate of reaction. N-terminal L-methionine is a prerequisite for activity but the enzyme has broad specificity at other positions. This is Peptide deformylase 1 from Vibrio cholerae serotype O1 (strain ATCC 39315 / El Tor Inaba N16961).